A 470-amino-acid chain; its full sequence is MATFMTEDFLLKNDIARTLYHKYAAPMPIYDFHCHLSPQEIADDRRFDNLGQIWLEGDHYKWRALRSAGVDESLITGKETSDYEKYMAWANTVPKTLGNPLYHWTHLELRRPFGITGTLFGPDTAESIWTQCNEKLATPAFSARGIMQQMNVRMVGTTDDPIDSLEYHHQIAADDSIDIEVAPSWRPDKVFKIELDGFVDYLGKLEAAADVSITRFDDLRQALTRRLDHFAACGCRASDHGIETLRFAPVPDDAQLDAILGKRLAGETLSELEIAQFTTAVLVWLGRQYAARGWVMQLHIGAIRNNNTRMFRLLGPDTGFDSIGDNNISWALSRLLDSMDVTNELPKTILYCLNPRDNEVLATMIGNFQGPGIAGKVQFGSGWWFNDQKDGMLRQLEQLSQMGLLSQFVGMLTDSRSFLSYTRHEYFRRILCNLLGQWAQDGEIPDDEAMLSRMVQDICFNNAQRYFTIK.

The protein belongs to the metallo-dependent hydrolases superfamily. Uronate isomerase family.

The catalysed reaction is D-glucuronate = D-fructuronate. The enzyme catalyses aldehydo-D-galacturonate = keto-D-tagaturonate. It functions in the pathway carbohydrate metabolism; pentose and glucuronate interconversion. This chain is Uronate isomerase, found in Salmonella typhi.